Consider the following 690-residue polypeptide: Serotransferrin-1 (690 aa).

The N-terminal stretch at 1-18 (MKLLLLSALLGCLATAYA) is a signal peptide. Transferrin-like domains are found at residues 25–329 (VKWC…SLKK) and 340–669 (IKWC…SLRK). Cysteines 28 and 50 form a disulfide. Residues aspartate 74 and tyrosine 104 each contribute to the Fe(3+) site. Intrachain disulfides connect cysteine 127-cysteine 207, cysteine 172-cysteine 186, and cysteine 235-cysteine 249. Residues threonine 129, serine 134, glycine 136, and tryptophan 137 each contribute to the hydrogencarbonate site. A glycan (N-linked (GlcNAc...) asparagine) is linked at asparagine 169. A Fe(3+)-binding site is contributed by tyrosine 201. Histidine 257 contributes to the Fe(3+) binding site. 2 disulfide bridges follow: cysteine 343-cysteine 379 and cysteine 353-cysteine 370. 2 residues coordinate Fe(3+): aspartate 394 and tyrosine 428. 7 disulfide bridges follow: cysteine 404–cysteine 681, cysteine 419–cysteine 642, cysteine 451–cysteine 529, cysteine 475–cysteine 670, cysteine 485–cysteine 499, cysteine 496–cysteine 512, and cysteine 569–cysteine 583. Threonine 453, arginine 457, alanine 459, and glycine 460 together coordinate hydrogencarbonate. Position 523 (tyrosine 523) interacts with Fe(3+). A Fe(3+)-binding site is contributed by histidine 591.

It belongs to the transferrin family. As to quaternary structure, monomer. As to expression, abundant in liver and serum with smaller amounts found in the stomach and kidney.

It localises to the secreted. Transferrins are iron binding transport proteins which can bind two Fe(3+) ions in association with the binding of an anion, usually bicarbonate. It is responsible for the transport of iron from sites of absorption and heme degradation to those of storage and utilization. Serum transferrin may also have a further role in stimulating cell proliferation. This Salmo salar (Atlantic salmon) protein is Serotransferrin-1 (tf1).